A 200-amino-acid chain; its full sequence is Peroxiredoxin (200 aa).

The Thioredoxin domain maps to 6 to 166 (ARIGHLAPGF…ILRLVQAFQF (161 aa)). The active-site Cysteine sulfenic acid (-SOH) intermediate is C52.

It belongs to the peroxiredoxin family. AhpC/Prx1 subfamily. In terms of assembly, homodimer; disulfide-linked, upon oxidation.

It carries out the reaction a hydroperoxide + [thioredoxin]-dithiol = an alcohol + [thioredoxin]-disulfide + H2O. Thiol-specific peroxidase that catalyzes the reduction of hydrogen peroxide and organic hydroperoxides to water and alcohols, respectively. Plays a role in cell protection against oxidative stress by detoxifying peroxides and as sensor of hydrogen peroxide-mediated signaling events. The sequence is that of Peroxiredoxin from Oncorhynchus mykiss (Rainbow trout).